A 678-amino-acid chain; its full sequence is Glycine--tRNA ligase beta subunit (678 aa).

The protein belongs to the class-II aminoacyl-tRNA synthetase family. Tetramer of two alpha and two beta subunits.

Its subcellular location is the cytoplasm. The catalysed reaction is tRNA(Gly) + glycine + ATP = glycyl-tRNA(Gly) + AMP + diphosphate. The protein is Glycine--tRNA ligase beta subunit of Streptococcus suis (strain 98HAH33).